A 151-amino-acid polypeptide reads, in one-letter code: UPF0178 protein PFLU_5917 (151 aa).

It belongs to the UPF0178 family.

The chain is UPF0178 protein PFLU_5917 from Pseudomonas fluorescens (strain SBW25).